Reading from the N-terminus, the 416-residue chain is Histidine--tRNA ligase (416 aa).

Belongs to the class-II aminoacyl-tRNA synthetase family.

It is found in the cytoplasm. It catalyses the reaction tRNA(His) + L-histidine + ATP = L-histidyl-tRNA(His) + AMP + diphosphate + H(+). The chain is Histidine--tRNA ligase (hisS) from Methanocaldococcus jannaschii (strain ATCC 43067 / DSM 2661 / JAL-1 / JCM 10045 / NBRC 100440) (Methanococcus jannaschii).